The sequence spans 374 residues: MEMO1 family protein aq_1336 (374 aa).

This sequence belongs to the MEMO1 family.

The protein is MEMO1 family protein aq_1336 of Aquifex aeolicus (strain VF5).